The primary structure comprises 266 residues: uncharacterized protein (266 aa).

A signal peptide spans 1–22 (MGYFKRVVLYIIVMVVSVFIIG). Cys23 carries N-palmitoyl cysteine lipidation. Cys23 carries S-diacylglycerol cysteine lipidation.

It belongs to the staphylococcal tandem lipoprotein family.

The protein resides in the cell membrane. This is an uncharacterized protein from Staphylococcus aureus (strain N315).